We begin with the raw amino-acid sequence, 419 residues long: Serine/threonine-protein kinase Kist (419 aa).

Positions 23–303 constitute a Protein kinase domain; sequence WQVQSRLGSG…PAEMALCSPF (281 aa). Residues 29 to 37 and K54 contribute to the ATP site; that span reads LGSGSSASV. D158 serves as the catalytic Proton acceptor. Residues 323–405 form the RRM domain; the sequence is LRLLNVLDDD…GKFVVATFYP (83 aa).

The protein belongs to the protein kinase superfamily. Ser/Thr protein kinase family. Interacts with PAM and CDKN1B/p27Kip1. Interacts with stathmin.

It localises to the nucleus. The enzyme catalyses L-seryl-[protein] + ATP = O-phospho-L-seryl-[protein] + ADP + H(+). It catalyses the reaction L-threonyl-[protein] + ATP = O-phospho-L-threonyl-[protein] + ADP + H(+). Functionally, upon serum stimulation, phosphorylates CDKN1B/p27Kip1, thus controlling CDKN1B subcellular location and cell cycle progression in G1 phase. May be involved in trafficking and/or processing of RNA. This Mus musculus (Mouse) protein is Serine/threonine-protein kinase Kist (Uhmk1).